The sequence spans 166 residues: Fer3-like protein (166 aa).

Residues Phe57 to Leu88 form a disordered region. The segment covering Gly60–Glu80 has biased composition (acidic residues). Positions Ala101–Met153 constitute a bHLH domain.

As to quaternary structure, heterodimer with TCF3/E12. Interacts with the bHLH domain of TCF3/E12.

The protein resides in the nucleus. Its function is as follows. Transcription factor that binds to the E-box and functions as inhibitor of transcription. DNA binding requires dimerization with an E protein. Inhibits transcription activation by ASCL1/MASH1 by sequestering E proteins. The chain is Fer3-like protein (FERD3L) from Homo sapiens (Human).